Here is a 265-residue protein sequence, read N- to C-terminus: Cell division protein DivIB (265 aa).

Over 1 to 33 (MRMELKMMGNVNKSNKTNEYILRRHKKKRKKKL) the chain is Cytoplasmic. Residues 34–54 (IIFSILLISILVTLCFKHPFF) form a helical membrane-spanning segment. A POTRA domain is found at 54–122 (FNVKIVEVKD…NKIVIHIKER (69 aa)). Residues 55-265 (NVKIVEVKDN…FKGNPVVFIK (211 aa)) are Extracellular-facing.

This sequence belongs to the FtsQ/DivIB family. DivIB subfamily.

The protein resides in the cell membrane. Cell division protein that may be involved in stabilizing or promoting the assembly of the division complex. In Clostridium tetani (strain Massachusetts / E88), this protein is Cell division protein DivIB.